Reading from the N-terminus, the 329-residue chain is tRNA uridine(34) hydroxylase (329 aa).

The Rhodanese domain occupies 123 to 217; the sequence is SDPDVILVDT…YLEEVPEEES (95 aa). Residue C177 is the Cysteine persulfide intermediate of the active site. Residues 285–329 form a disordered region; it reads REKQVQLSNARGETHVGGDAAHLIDQRKKEKLAHKEQQRSGKKAK. Residues 296-323 are compositionally biased toward basic and acidic residues; sequence GETHVGGDAAHLIDQRKKEKLAHKEQQR.

This sequence belongs to the TrhO family.

The enzyme catalyses uridine(34) in tRNA + AH2 + O2 = 5-hydroxyuridine(34) in tRNA + A + H2O. Its function is as follows. Catalyzes oxygen-dependent 5-hydroxyuridine (ho5U) modification at position 34 in tRNAs. The polypeptide is tRNA uridine(34) hydroxylase (Vibrio atlanticus (strain LGP32) (Vibrio splendidus (strain Mel32))).